The primary structure comprises 177 residues: uncharacterized protein (177 aa).

Positions 10-177 constitute an N-acetyltransferase domain; the sequence is LILRQITDQD…NVYSIVKPRE (168 aa).

Belongs to the acetyltransferase family.

This is an uncharacterized protein from Bacillus subtilis (strain 168).